The chain runs to 435 residues: Enolase (435 aa).

A (2R)-2-phosphoglycerate-binding site is contributed by Gln-163. The active-site Proton donor is Glu-205. Mg(2+)-binding residues include Asp-243, Glu-292, and Asp-319. Residues Lys-344, Arg-373, Ser-374, and Lys-395 each coordinate (2R)-2-phosphoglycerate. The active-site Proton acceptor is the Lys-344.

It belongs to the enolase family. It depends on Mg(2+) as a cofactor.

It is found in the cytoplasm. Its subcellular location is the secreted. It localises to the cell surface. It carries out the reaction (2R)-2-phosphoglycerate = phosphoenolpyruvate + H2O. The protein operates within carbohydrate degradation; glycolysis; pyruvate from D-glyceraldehyde 3-phosphate: step 4/5. In terms of biological role, catalyzes the reversible conversion of 2-phosphoglycerate (2-PG) into phosphoenolpyruvate (PEP). It is essential for the degradation of carbohydrates via glycolysis. In Streptococcus pyogenes serotype M12 (strain MGAS2096), this protein is Enolase.